A 79-amino-acid polypeptide reads, in one-letter code: Defensin-like protein 3 (79 aa).

The N-terminal stretch at 1–29 (MAKFASIITLLFAALVVFAAFEAPTMVEA) is a signal peptide. 4 disulfide bridges follow: Cys-32-Cys-79, Cys-43-Cys-64, Cys-49-Cys-73, and Cys-53-Cys-75.

It belongs to the DEFL family.

The protein localises to the secreted. Functionally, possesses antifungal activity sensitive to inorganic cations. This is Defensin-like protein 3 (AFP3) from Brassica napus (Rape).